A 159-amino-acid polypeptide reads, in one-letter code: Ribosomal RNA large subunit methyltransferase H (159 aa).

Residues I76, G108, and 127-132 (FSKMTF) contribute to the S-adenosyl-L-methionine site.

Belongs to the RNA methyltransferase RlmH family. Homodimer.

The protein localises to the cytoplasm. The catalysed reaction is pseudouridine(1915) in 23S rRNA + S-adenosyl-L-methionine = N(3)-methylpseudouridine(1915) in 23S rRNA + S-adenosyl-L-homocysteine + H(+). Functionally, specifically methylates the pseudouridine at position 1915 (m3Psi1915) in 23S rRNA. The protein is Ribosomal RNA large subunit methyltransferase H of Clostridium botulinum (strain Loch Maree / Type A3).